A 202-amino-acid polypeptide reads, in one-letter code: GTP cyclohydrolase-2 (202 aa).

R48–E52 contacts GTP. C53, C64, and C66 together coordinate Zn(2+). Residues Q69, E91–R93, and T113 contribute to the GTP site. The active-site Proton acceptor is the D125. The active-site Nucleophile is the R127. Positions 148 and 153 each coordinate GTP.

Belongs to the GTP cyclohydrolase II family. It depends on Zn(2+) as a cofactor.

It carries out the reaction GTP + 4 H2O = 2,5-diamino-6-hydroxy-4-(5-phosphoribosylamino)-pyrimidine + formate + 2 phosphate + 3 H(+). It functions in the pathway cofactor biosynthesis; riboflavin biosynthesis; 5-amino-6-(D-ribitylamino)uracil from GTP: step 1/4. Its function is as follows. Catalyzes the conversion of GTP to 2,5-diamino-6-ribosylamino-4(3H)-pyrimidinone 5'-phosphate (DARP), formate and pyrophosphate. The polypeptide is GTP cyclohydrolase-2 (Colwellia psychrerythraea (strain 34H / ATCC BAA-681) (Vibrio psychroerythus)).